The sequence spans 434 residues: Gamma-glutamyl phosphate reductase (434 aa).

Polar residues predominate over residues 1–11; sequence MTNSNEAQENA. Positions 1 to 26 are disordered; sequence MTNSNEAQENALSPERQAERDEVLAK. A compositionally biased stretch (basic and acidic residues) spans 16–25; sequence RQAERDEVLA.

This sequence belongs to the gamma-glutamyl phosphate reductase family.

The protein resides in the cytoplasm. The enzyme catalyses L-glutamate 5-semialdehyde + phosphate + NADP(+) = L-glutamyl 5-phosphate + NADPH + H(+). It participates in amino-acid biosynthesis; L-proline biosynthesis; L-glutamate 5-semialdehyde from L-glutamate: step 2/2. In terms of biological role, catalyzes the NADPH-dependent reduction of L-glutamate 5-phosphate into L-glutamate 5-semialdehyde and phosphate. The product spontaneously undergoes cyclization to form 1-pyrroline-5-carboxylate. The protein is Gamma-glutamyl phosphate reductase of Corynebacterium jeikeium (strain K411).